We begin with the raw amino-acid sequence, 125 residues long: Holo-[acyl-carrier-protein] synthase (125 aa).

Positions 7 and 56 each coordinate Mg(2+).

It belongs to the P-Pant transferase superfamily. AcpS family. Mg(2+) is required as a cofactor.

Its subcellular location is the cytoplasm. The catalysed reaction is apo-[ACP] + CoA = holo-[ACP] + adenosine 3',5'-bisphosphate + H(+). Functionally, transfers the 4'-phosphopantetheine moiety from coenzyme A to a Ser of acyl-carrier-protein. The chain is Holo-[acyl-carrier-protein] synthase from Chlamydia muridarum (strain MoPn / Nigg).